Here is a 349-residue protein sequence, read N- to C-terminus: MSTTAKEAPSSLFSLLPNDIVLNILARVPRWYHPILSCVSKNLRFLVSSSELKITRSLLEKDRFYVCFQEHSNSPSLTTYHWFSFTENRRCLVSIPFTSPVEPYFATLTLGPEIYFVGKSRSMWILDSRSGKLRQGPRPLVACDQAAVGLVNDKIYVFGGIDDMNKRYYEGIHAQVFDLKTQTWHVGPNLSVKLACLNRSVVTPSLGRKIYVRGTDRDVTIYDIKDGKCDKIIPADDFSSGDMCVVDNVIYMYYHNVGLMWYESKEKQWSVVHGLEFNGVFNSIAIAEYNGKLAFLWHDRNKREIWCAMINLYGSSKVAIRGRVEWSHRLLSDLPSNYNFKHFTICTDY.

In terms of domain architecture, F-box spans 11–58; the sequence is SLFSLLPNDIVLNILARVPRWYHPILSCVSKNLRFLVSSSELKITRSL. The Kelch repeat unit spans residues 154-204; the sequence is KIYVFGGIDDMNKRYYEGIHAQVFDLKTQTWHVGPNLSVKLACLNRSVVTP.

In Arabidopsis thaliana (Mouse-ear cress), this protein is Putative F-box/kelch-repeat protein At4g02310.